The following is a 641-amino-acid chain: E3 ubiquitin-protein ligase TRIM47 (641 aa).

The segment at 9–58 adopts an RING-type zinc-finger fold; that stretch reads CPICLEPLREPVTLPCGHNFCLACLGALWPHRSAGGTGGSGGPARCPLCQ. The residue at position 72 (T72) is a Phosphothreonine. Positions 81 to 123 are disordered; it reads QGSVPGPMSAPASGSTRGATPEPSAPSAPPPAPEPSAPCAPEQ. A compositionally biased stretch (pro residues) spans 103-118; it reads PSAPSAPPPAPEPSAP. The segment at 181–221 adopts a B box-type zinc-finger fold; sequence LEESLCPRHLRPLERYCRVERVCLCEACATQDHRGHELVPL. Zn(2+) contacts are provided by C186, H189, C208, and H213. A coiled-coil region spans residues 305–325; that stretch reads QGDLRRQEEQRSRLSKARHNL. At S393 the chain carries Phosphoserine. The segment at 396 to 416 is disordered; sequence DGLQKLGSEDVESQDPDSTSL. In terms of domain architecture, B30.2/SPRY spans 413–634; sequence STSLLESEAP…LQIGPLKKSC (222 aa). S464 carries the phosphoserine modification. At R585 the chain carries Omega-N-methylarginine. S591 is subject to Phosphoserine.

It belongs to the TRIM/RBCC family. Expressed in hepatocytes, expression is increased in fatty livers.

It is found in the cytoplasm. Its subcellular location is the nucleus. The catalysed reaction is S-ubiquitinyl-[E2 ubiquitin-conjugating enzyme]-L-cysteine + [acceptor protein]-L-lysine = [E2 ubiquitin-conjugating enzyme]-L-cysteine + N(6)-ubiquitinyl-[acceptor protein]-L-lysine.. It participates in protein modification; protein ubiquitination. Functionally, E3 ubiquitin-protein ligase that mediates the ubiquitination and proteasomal degradation of CYLD. The chain is E3 ubiquitin-protein ligase TRIM47 from Mus musculus (Mouse).